The chain runs to 931 residues: Elicitor of plant defense protein 1 (931 aa).

A disordered region spans residues 13 to 32 (NYNSVIPPPEPLNTDPDMHP). Positions 19–277 (PPPEPLNTDP…NLCTEAFNPL (259 aa)) constitute a uDENN domain. The cDENN domain maps to 301–433 (EIPGSRSIDL…ARRKLMSLLQ (133 aa)). The region spanning 435 to 799 (AAPHKLRYGV…DREMQPANNA (365 aa)) is the dDENN domain. Disordered regions lie at residues 478-552 (LGKW…SRSD) and 566-586 (SGHF…DKHP). Residues 521-537 (TSKSGKTSPQSSVSPVS) are compositionally biased toward polar residues. Basic and acidic residues predominate over residues 566 to 575 (SGHFGEEKMR). The Phorbol-ester/DAG-type zinc-finger motif lies at 666–714 (GHCFNWIPKDNTSICNICNDHAEGDGIYKCTGCKIFSHGRCLGHASLVC).

Belongs to the EPD1 elicitor family.

It is found in the secreted. Its subcellular location is the host cell. In terms of biological role, acts as an elicitor that triggers cell death and defense responses in the host plants. The polypeptide is Elicitor of plant defense protein 1 (Fusarium odoratissimum (strain NRRL 54006)).